The chain runs to 219 residues: Adenylate kinase (219 aa).

10 to 15 contacts ATP; it reads GAGKGT. The tract at residues 30–59 is NMP; that stretch reads STGDMLRAAVKAETPVGLEAKKVMDAGQLV. Residues Thr-31, Arg-36, 57 to 59, 85 to 88, and Gln-92 contribute to the AMP site; these read QLV and GFPR. Residues 122–159 are LID; that stretch reads GRRVHLSSGRTYHVLFNPPKQEGLDDETGEPLVQRADD. ATP contacts are provided by residues Arg-123 and 132–133; that span reads TY. AMP contacts are provided by Arg-156 and Arg-167. Gly-203 serves as a coordination point for ATP.

This sequence belongs to the adenylate kinase family. Monomer.

The protein localises to the cytoplasm. It catalyses the reaction AMP + ATP = 2 ADP. It functions in the pathway purine metabolism; AMP biosynthesis via salvage pathway; AMP from ADP: step 1/1. In terms of biological role, catalyzes the reversible transfer of the terminal phosphate group between ATP and AMP. Plays an important role in cellular energy homeostasis and in adenine nucleotide metabolism. The protein is Adenylate kinase of Chlorobium limicola (strain DSM 245 / NBRC 103803 / 6330).